Here is a 181-residue protein sequence, read N- to C-terminus: ATP synthase subunit b (181 aa).

The helical transmembrane segment at 24 to 44 threads the bilayer; that stretch reads LFPNLPNFIAHLLATIILVIV.

This sequence belongs to the ATPase B chain family. In terms of assembly, F-type ATPases have 2 components, F(1) - the catalytic core - and F(0) - the membrane proton channel. F(1) has five subunits: alpha(3), beta(3), gamma(1), delta(1), epsilon(1). F(0) has three main subunits: a(1), b(2) and c(10-14). The alpha and beta chains form an alternating ring which encloses part of the gamma chain. F(1) is attached to F(0) by a central stalk formed by the gamma and epsilon chains, while a peripheral stalk is formed by the delta and b chains.

It localises to the cell membrane. In terms of biological role, f(1)F(0) ATP synthase produces ATP from ADP in the presence of a proton or sodium gradient. F-type ATPases consist of two structural domains, F(1) containing the extramembraneous catalytic core and F(0) containing the membrane proton channel, linked together by a central stalk and a peripheral stalk. During catalysis, ATP synthesis in the catalytic domain of F(1) is coupled via a rotary mechanism of the central stalk subunits to proton translocation. Functionally, component of the F(0) channel, it forms part of the peripheral stalk, linking F(1) to F(0). The protein is ATP synthase subunit b of Mycoplasma mycoides subsp. mycoides SC (strain CCUG 32753 / NCTC 10114 / PG1).